Here is a 283-residue protein sequence, read N- to C-terminus: Protein/nucleic acid deglycase HchA (283 aa).

His86, Glu91, and His123 together coordinate Zn(2+). The active-site Nucleophile is Cys185.

It belongs to the peptidase C56 family. HchA subfamily. In terms of assembly, homodimer.

It localises to the cytoplasm. The catalysed reaction is N(omega)-(1-hydroxy-2-oxopropyl)-L-arginyl-[protein] + H2O = lactate + L-arginyl-[protein] + H(+). It catalyses the reaction N(6)-(1-hydroxy-2-oxopropyl)-L-lysyl-[protein] + H2O = lactate + L-lysyl-[protein] + H(+). The enzyme catalyses S-(1-hydroxy-2-oxopropyl)-L-cysteinyl-[protein] + H2O = lactate + L-cysteinyl-[protein] + H(+). It carries out the reaction N(omega)-(1-hydroxy-2-oxoethyl)-L-arginyl-[protein] + H2O = L-arginyl-[protein] + glycolate + H(+). The catalysed reaction is N(6)-(1-hydroxy-2-oxoethyl)-L-lysyl-[protein] + H2O = glycolate + L-lysyl-[protein] + H(+). It catalyses the reaction S-(1-hydroxy-2-oxoethyl)-L-cysteinyl-[protein] + H2O = glycolate + L-cysteinyl-[protein] + H(+). The enzyme catalyses N(2)-(1-hydroxy-2-oxopropyl)-dGTP + H2O = lactate + dGTP + H(+). It carries out the reaction N(2)-(1-hydroxy-2-oxopropyl)-GTP + H2O = lactate + GTP + H(+). The catalysed reaction is N(2)-(1-hydroxy-2-oxopropyl)-GDP + H2O = lactate + GDP + H(+). It catalyses the reaction N(2)-(1-hydroxy-2-oxopropyl)-GMP + H2O = lactate + GMP + H(+). The enzyme catalyses N(2)-(1-hydroxy-2-oxoethyl)-dGTP + H2O = dGTP + glycolate + H(+). It carries out the reaction N(2)-(1-hydroxy-2-oxoethyl)-GTP + H2O = glycolate + GTP + H(+). The catalysed reaction is N(2)-(1-hydroxy-2-oxoethyl)-GDP + H2O = glycolate + GDP + H(+). It catalyses the reaction N(2)-(1-hydroxy-2-oxoethyl)-GMP + H2O = glycolate + GMP + H(+). The enzyme catalyses an N(2)-(1-hydroxy-2-oxopropyl)-guanosine in RNA + H2O = a guanosine in RNA + lactate + H(+). It carries out the reaction an N(2)-(1-hydroxy-2-oxopropyl)-2'-deoxyguanosine in DNA + H2O = a 2'-deoxyguanosine in DNA + lactate + H(+). The catalysed reaction is an N(2)-(1-hydroxy-2-oxoethyl)-guanosine in RNA + H2O = a guanosine in RNA + glycolate + H(+). It catalyses the reaction an N(2)-(1-hydroxy-2-oxoethyl)-2'-deoxyguanosine in DNA + H2O = a 2'-deoxyguanosine in DNA + glycolate + H(+). In terms of biological role, protein and nucleotide deglycase that catalyzes the deglycation of the Maillard adducts formed between amino groups of proteins or nucleotides and reactive carbonyl groups of glyoxals. Thus, functions as a protein deglycase that repairs methylglyoxal- and glyoxal-glycated proteins, and releases repaired proteins and lactate or glycolate, respectively. Deglycates cysteine, arginine and lysine residues in proteins, and thus reactivates these proteins by reversing glycation by glyoxals. Acts on early glycation intermediates (hemithioacetals and aminocarbinols), preventing the formation of Schiff bases and advanced glycation endproducts (AGE). Also functions as a nucleotide deglycase able to repair glycated guanine in the free nucleotide pool (GTP, GDP, GMP, dGTP) and in DNA and RNA. Is thus involved in a major nucleotide repair system named guanine glycation repair (GG repair), dedicated to reversing methylglyoxal and glyoxal damage via nucleotide sanitization and direct nucleic acid repair. Plays an important role in protecting cells from carbonyl stress. The protein is Protein/nucleic acid deglycase HchA of Escherichia coli O81 (strain ED1a).